The chain runs to 660 residues: Galactocerebrosidase (660 aa).

The first 18 residues, 1 to 18 (MQTHNFLCIISVILGCSA), serve as a signal peptide directing secretion. The substrate site is built by Thr87 and Trp129. A glycan (N-linked (GlcNAc...) asparagine) is linked at Asn147. Substrate is bound at residue Asn175. Glu176 (proton donor/acceptor) is an active-site residue. The active-site Nucleophile is the Glu251. A disulfide bridge links Cys264 with Cys371. Residues Asn293 and Asn356 are each glycosylated (N-linked (GlcNAc...) asparagine). Arg373 lines the substrate pocket. 6 N-linked (GlcNAc...) asparagine glycosylation sites follow: Asn413, Asn465, Asn495, Asn499, Asn537, and Asn578.

This sequence belongs to the glycosyl hydrolase 59 family.

Its subcellular location is the lysosome. It carries out the reaction a beta-D-galactosyl-(1&lt;-&gt;1')-N-acylsphing-4-enine + H2O = an N-acylsphing-4-enine + D-galactose. It catalyses the reaction beta-D-galactosyl-(1&lt;-&gt;1)-sphing-4-enine + H2O = sphing-4-enine + D-galactose. The enzyme catalyses a D-galactosylceramide + H2O = an N-acyl-sphingoid base + D-galactose. Functionally, hydrolyzes the galactose ester bonds of glycolipids such as galactosylceramide and galactosylsphingosine. The sequence is that of Galactocerebrosidase from Danio rerio (Zebrafish).